The primary structure comprises 271 residues: RELT-like protein 1 (271 aa).

The first 23 residues, 1-23, serve as a signal peptide directing secretion; that stretch reads MAPRALPGSAVLAAAVFVGGAVS. The Extracellular portion of the chain corresponds to 24–57; the sequence is SPLVAPDNGSSRTLHSRTETTPSPSNDTGNGHPE. Residues 28–53 are disordered; sequence APDNGSSRTLHSRTETTPSPSNDTGN. Residues N31 and N49 are each glycosylated (N-linked (GlcNAc...) asparagine). A compositionally biased stretch (polar residues) spans 31-52; that stretch reads NGSSRTLHSRTETTPSPSNDTG. A helical membrane pass occupies residues 58–78; the sequence is YIAYALVPVFFIMGLFGVLIC. Residues 79-271 lie on the Cytoplasmic side of the membrane; it reads HLLKKKGYRC…PVKRERSGTE (193 aa). Residues 89 to 113 are a coiled coil; sequence TTEAEQDIEEEKVEKIELNDSVNEN. Residues S109 and S114 each carry the phosphoserine modification. 2 disordered regions span residues 145–173 and 233–271; these read DPES…TPGK and VEHK…SGTE. The span at 155–165 shows a compositional bias: pro residues; the sequence is PGSPPVSPGPL. Basic and acidic residues predominate over residues 233 to 244; it reads VEHKSNQKERRS. A phosphoserine mark is found at S244 and S247.

This sequence belongs to the RELT family. As to quaternary structure, interacts with RELT, RELL2 and OXSR1. Interacts with PLSCR1. Post-translationally, phosphorylated in vitro by OXSR1. As to expression, widely expressed. Expressed at highest levels in the placenta, skeletal muscle, spleen and testis.

It is found in the cell membrane. Its function is as follows. Induces activation of MAPK14/p38 cascade, when overexpressed. Induces apoptosis, when overexpressed. The chain is RELT-like protein 1 (RELL1) from Homo sapiens (Human).